A 115-amino-acid chain; its full sequence is Holo-[acyl-carrier-protein] synthase (115 aa).

Residues D5 and E51 each coordinate Mg(2+).

It belongs to the P-Pant transferase superfamily. AcpS family. Requires Mg(2+) as cofactor.

It localises to the cytoplasm. The enzyme catalyses apo-[ACP] + CoA = holo-[ACP] + adenosine 3',5'-bisphosphate + H(+). Its function is as follows. Transfers the 4'-phosphopantetheine moiety from coenzyme A to a Ser of acyl-carrier-protein. The sequence is that of Holo-[acyl-carrier-protein] synthase from Helicobacter acinonychis (strain Sheeba).